The sequence spans 244 residues: NAD reductase coq12 (244 aa).

Residues 131 to 158 (NPLMNSEKNSTSVEDLPGSNRTQQTSSH) form a disordered region. Residues 132-158 (PLMNSEKNSTSVEDLPGSNRTQQTSSH) show a composition bias toward polar residues.

The protein localises to the mitochondrion. The catalysed reaction is a reduced flavin + NAD(+) = an oxidized flavin + NADH + 2 H(+). In terms of biological role, NADH-dependent flavin reductase that acts in the coenzyme Q biosynthetic pathway. Required for synthesis of the p-hydroxybenzoic acid (PHB) precursor to form a quinone backbone. The protein is NAD reductase coq12 of Schizosaccharomyces pombe (strain 972 / ATCC 24843) (Fission yeast).